The chain runs to 463 residues: Rubisco accumulation factor 1, chloroplastic (463 aa).

Residues M1–P18 show a composition bias toward low complexity. A chloroplast-targeting transit peptide spans M1–R31. The tract at residues M1–P84 is disordered. Basic residues predominate over residues R19–S33. Over residues P43–G53 the composition is skewed to gly residues. The N-terminal alpha-helix stretch occupies residues L83 to L275. Residues R240–E294 are a coiled coil. Positions V305 to P450 are C-terminal beta sheet.

It belongs to the RAF family. In terms of assembly, homotrimer. In terms of tissue distribution, expressed in bundle sheath.

The protein resides in the plastid. The protein localises to the chloroplast. Required for assembly or stability of RuBisCO. Acts at a postchaperonin step to fold and/or assemble the large subunit (LS) into RuBisCO. In Zea mays (Maize), this protein is Rubisco accumulation factor 1, chloroplastic.